The following is a 354-amino-acid chain: Protein-glutamate methylesterase/protein-glutamine glutaminase (354 aa).

The 118-residue stretch at 7–124 (KVLCVDDSAL…REGMLEYTEM (118 aa)) folds into the Response regulatory domain. Asp-58 is modified (4-aspartylphosphate). The 193-residue stretch at 156–348 (LLSSEKVIII…AALMKRAEAS (193 aa)) folds into the CheB-type methylesterase domain. Catalysis depends on residues Ser-168, His-194, and Asp-290.

The protein belongs to the CheB family. Phosphorylated by CheA. Phosphorylation of the N-terminal regulatory domain activates the methylesterase activity.

It localises to the cytoplasm. It carries out the reaction [protein]-L-glutamate 5-O-methyl ester + H2O = L-glutamyl-[protein] + methanol + H(+). It catalyses the reaction L-glutaminyl-[protein] + H2O = L-glutamyl-[protein] + NH4(+). Involved in chemotaxis. Part of a chemotaxis signal transduction system that modulates chemotaxis in response to various stimuli. Catalyzes the demethylation of specific methylglutamate residues introduced into the chemoreceptors (methyl-accepting chemotaxis proteins or MCP) by CheR. Also mediates the irreversible deamidation of specific glutamine residues to glutamic acid. The protein is Protein-glutamate methylesterase/protein-glutamine glutaminase of Chromohalobacter salexigens (strain ATCC BAA-138 / DSM 3043 / CIP 106854 / NCIMB 13768 / 1H11).